Consider the following 327-residue polypeptide: tRNA-dihydrouridine(20/20a) synthase (327 aa).

FMN contacts are provided by residues 17–19 and glutamine 69; that span reads PML. Cysteine 99 serves as the catalytic Proton donor. Residues lysine 138, histidine 170, 210–212, and 232–233 each bind FMN; these read NGG and GR.

It belongs to the Dus family. DusA subfamily. It depends on FMN as a cofactor.

It catalyses the reaction 5,6-dihydrouridine(20) in tRNA + NADP(+) = uridine(20) in tRNA + NADPH + H(+). The enzyme catalyses 5,6-dihydrouridine(20) in tRNA + NAD(+) = uridine(20) in tRNA + NADH + H(+). The catalysed reaction is 5,6-dihydrouridine(20a) in tRNA + NADP(+) = uridine(20a) in tRNA + NADPH + H(+). It carries out the reaction 5,6-dihydrouridine(20a) in tRNA + NAD(+) = uridine(20a) in tRNA + NADH + H(+). Functionally, catalyzes the synthesis of 5,6-dihydrouridine (D), a modified base found in the D-loop of most tRNAs, via the reduction of the C5-C6 double bond in target uridines. Specifically modifies U20 and U20a in tRNAs. The polypeptide is tRNA-dihydrouridine(20/20a) synthase (Pasteurella multocida (strain Pm70)).